The primary structure comprises 369 residues: 3-dehydroquinate synthase (369 aa).

NAD(+) contacts are provided by residues 80–85 (DGEQYK), 114–118 (GVIGD), 138–139 (TT), lysine 151, lysine 160, and 178–181 (TLKT). 3 residues coordinate Zn(2+): glutamate 193, histidine 256, and histidine 273.

Belongs to the sugar phosphate cyclases superfamily. Dehydroquinate synthase family. Requires Co(2+) as cofactor. Zn(2+) is required as a cofactor. The cofactor is NAD(+).

It localises to the cytoplasm. The catalysed reaction is 7-phospho-2-dehydro-3-deoxy-D-arabino-heptonate = 3-dehydroquinate + phosphate. It functions in the pathway metabolic intermediate biosynthesis; chorismate biosynthesis; chorismate from D-erythrose 4-phosphate and phosphoenolpyruvate: step 2/7. Catalyzes the conversion of 3-deoxy-D-arabino-heptulosonate 7-phosphate (DAHP) to dehydroquinate (DHQ). The polypeptide is 3-dehydroquinate synthase (Psychrobacter cryohalolentis (strain ATCC BAA-1226 / DSM 17306 / VKM B-2378 / K5)).